Reading from the N-terminus, the 1256-residue chain is SNF2 domain-containing protein CLASSY 1 (1256 aa).

2 disordered regions span residues 269 to 290 (ELRR…EIQP) and 448 to 467 (GNVV…VSRE). Positions 278–290 (GRPERYGDSEIQP) are enriched in basic and acidic residues. Residues 451–463 (VHKRNGPHSRIRS) are compositionally biased toward basic residues. The Helicase ATP-binding domain occupies 699–898 (DPSSDKIGGC…FNTLCLARPK (200 aa)). 712–719 (HTPGAGKT) contacts ATP. The short motif at 849 to 852 (DEGH) is the DEAH box element. One can recognise a Helicase C-terminal domain in the interval 1061-1222 (FVLNLVFRVV…EFVEDPSQWQ (162 aa)).

The protein belongs to the helicase family. As to quaternary structure, interacts with NRPD1, NRPD3 and SHH1.

It is found in the nucleus. The protein resides in the nucleoplasm. It localises to the nucleolus. Its function is as follows. Probable chromatin remodeling factor. Required for the initial establishment of DNA methylation and for accumulation of 24-nt siRNAs. May act on RNA templates by remodeling ribonucleoprotein structures and thereby influencing the availability of the RNA to polymerases. This chain is SNF2 domain-containing protein CLASSY 1 (CLSY1), found in Arabidopsis thaliana (Mouse-ear cress).